Consider the following 428-residue polypeptide: Flotillin-1 (428 aa).

A phosphoserine mark is found at S19, S163, and S385. Phosphothreonine is present on T387.

This sequence belongs to the band 7/mec-2 family. Flotillin subfamily. Heterooligomeric complex of flotillin-1 and flotillin-2 and caveolin-1 and caveolin-2. Interacts with ECPAS. As to expression, high expression in brain, white adipose tissue, heart muscle, skeletal muscle and lung. Low expression in spleen, liver and testis.

It is found in the cell membrane. Its subcellular location is the endosome. It localises to the membrane. The protein localises to the caveola. The protein resides in the melanosome. It is found in the membrane raft. Its function is as follows. May act as a scaffolding protein within caveolar membranes, functionally participating in formation of caveolae or caveolae-like vesicles. In Mus musculus (Mouse), this protein is Flotillin-1 (Flot1).